A 681-amino-acid chain; its full sequence is MADPVAGIAGSAAKSVRPFRSSEAYVEAMKEDLAEWLNALYGLGLPGGGDGFLTGLATGTTLCQHANAVTEAARALAAARPARGVAFQAHSVVPGSFMARDNVATFIGWCRVELGVPEVLMFETEDLVLRKNEKSVVLCLLEVARRGARLGLLAPRLVQFEQEIERELRAAPPAPNAPAAGEDTTETAPAPGTPARGPRMTPSDLRNLDELVREILGRCTCPDQFPMIKVSEGKYRVGDSSLLIFVRVLRSHVMVRVGGGWDTLEHYLDKHDPCRCSSTAHRPPQPRVCTFSPQRVSPTTSPRPASPVPGSERRGSRPEMTPVSLRSTKEGPETPPRPRDQLPPHPRSRRYSGDSDSSASSAQSGPLGTRSDDTGTGPRRERPSRRLTTGTPASPRRPPALRSQSRDRLDRGRPRGAPGGRGAQLSVPSPARRARSQSREEQAVLLVRRDRDGQHSWVPRGRGSGGSGRSTPQTPRARSPAAPRLSRVSSPSPELGTTPASIFRTPLQLDPQQEQQLFRRLEEEFLANARALEAVASVTPTGPVPDPARAPDPPAPDSAYCSSSSSSSSLSVLGGKCGQPGDSGRTANGLPGPRSQALSSSSDEGSPCPGMGGPLDAPGSPLACTEPSRTWARGRMDTQPDRKPSRIPTPRGPRRPSGPAELGTWHALHSVTPRAEPDSWM.

The residue at position 2 (A2) is an N-acetylalanine. The Calponin-homology (CH) domain occupies 27–148 (EAMKEDLAEW…CLLEVARRGA (122 aa)). 3 disordered regions span residues 168 to 204 (LRAA…TPSD), 278 to 509 (STAH…PLQL), and 536 to 681 (ASVT…DSWM). Over residues 186–199 (ETAPAPGTPARGPR) the composition is skewed to low complexity. The residue at position 193 (T193) is a Phosphothreonine. One can recognise a GAR domain in the interval 203–275 (SDLRNLDELV…HYLDKHDPCR (73 aa)). Positions 291 to 303 (FSPQRVSPTTSPR) are enriched in polar residues. Phosphoserine occurs at positions 306 and 316. A compositionally biased stretch (basic and acidic residues) spans 327–342 (STKEGPETPPRPRDQL). Phosphothreonine is present on T334. Phosphoserine occurs at positions 352 and 355. Positions 354 to 365 (DSDSSASSAQSG) are enriched in low complexity. Over residues 370-381 (RSDDTGTGPRRE) the composition is skewed to basic and acidic residues. A Phosphothreonine modification is found at T391. Phosphoserine is present on S394. The segment covering 404–413 (QSRDRLDRGR) has biased composition (basic and acidic residues). Phosphoserine is present on residues S436, S438, S479, and S486. The segment covering 437-454 (QSREEQAVLLVRRDRDGQ) has biased composition (basic and acidic residues). The span at 475-493 (PRARSPAAPRLSRVSSPSP) shows a compositional bias: low complexity. An Omega-N-methylarginine modification is found at R487. A phosphoserine mark is found at S490 and S492. T498 carries the phosphothreonine modification. Omega-N-methylarginine is present on R504. Residues 542-556 (GPVPDPARAPDPPAP) show a composition bias toward pro residues. The segment covering 557-571 (DSAYCSSSSSSSSLS) has biased composition (low complexity). The residue at position 633 (R633) is an Omega-N-methylarginine. Positions 634–644 (GRMDTQPDRKP) are enriched in basic and acidic residues. Residue S657 is modified to Phosphoserine.

Belongs to the GAS2 family. Interacts with MAPRE1.

It is found in the cytoplasm. Its subcellular location is the cytoskeleton. The protein localises to the stress fiber. In terms of biological role, involved in the cross-linking of microtubules and microfilaments. Regulates microtubule dynamics and stability by interacting with microtubule plus-end tracking proteins, such as MAPRE1, to regulate microtubule growth along actin stress fibers. This is GAS2-like protein 1 (GAS2L1) from Homo sapiens (Human).